Here is a 101-residue protein sequence, read N- to C-terminus: Small ribosomal subunit protein uS14 (101 aa).

It belongs to the universal ribosomal protein uS14 family. As to quaternary structure, part of the 30S ribosomal subunit. Contacts proteins S3 and S10.

Its function is as follows. Binds 16S rRNA, required for the assembly of 30S particles and may also be responsible for determining the conformation of the 16S rRNA at the A site. The protein is Small ribosomal subunit protein uS14 of Acinetobacter baumannii (strain AB307-0294).